Consider the following 248-residue polypeptide: NH(3)-dependent NAD(+) synthetase (248 aa).

Residue 30–37 participates in ATP binding; that stretch reads GLSGGIDS. Residue D36 participates in Mg(2+) binding. R114 contacts deamido-NAD(+). Residue T134 coordinates ATP. E139 provides a ligand contact to Mg(2+). Residues K147 and D154 each contribute to the deamido-NAD(+) site. Positions 163 and 185 each coordinate ATP. Deamido-NAD(+) is bound at residue 232–233; sequence HK.

This sequence belongs to the NAD synthetase family. Homodimer.

The enzyme catalyses deamido-NAD(+) + NH4(+) + ATP = AMP + diphosphate + NAD(+) + H(+). It participates in cofactor biosynthesis; NAD(+) biosynthesis; NAD(+) from deamido-NAD(+) (ammonia route): step 1/1. In terms of biological role, catalyzes the ATP-dependent amidation of deamido-NAD to form NAD. Uses ammonia as a nitrogen source. The polypeptide is NH(3)-dependent NAD(+) synthetase (Mycoplasma genitalium (strain ATCC 33530 / DSM 19775 / NCTC 10195 / G37) (Mycoplasmoides genitalium)).